The following is a 691-amino-acid chain: Elongation factor G (691 aa).

The 275-residue stretch at 8–282 folds into the tr-type G domain; it reads ERVRNIGIAA…AVVNYLPAPV (275 aa). Residues 17-24, 81-85, and 135-138 each bind GTP; these read AHIDAGKT, DTPGH, and NKMD.

Belongs to the TRAFAC class translation factor GTPase superfamily. Classic translation factor GTPase family. EF-G/EF-2 subfamily.

It localises to the cytoplasm. In terms of biological role, catalyzes the GTP-dependent ribosomal translocation step during translation elongation. During this step, the ribosome changes from the pre-translocational (PRE) to the post-translocational (POST) state as the newly formed A-site-bound peptidyl-tRNA and P-site-bound deacylated tRNA move to the P and E sites, respectively. Catalyzes the coordinated movement of the two tRNA molecules, the mRNA and conformational changes in the ribosome. The sequence is that of Elongation factor G from Prochlorococcus marinus (strain NATL2A).